The chain runs to 156 residues: Small ribosomal subunit protein uS7 (156 aa).

This sequence belongs to the universal ribosomal protein uS7 family. Part of the 30S ribosomal subunit. Contacts proteins S9 and S11.

Functionally, one of the primary rRNA binding proteins, it binds directly to 16S rRNA where it nucleates assembly of the head domain of the 30S subunit. Is located at the subunit interface close to the decoding center, probably blocks exit of the E-site tRNA. The sequence is that of Small ribosomal subunit protein uS7 from Blochmanniella pennsylvanica (strain BPEN).